The following is a 423-amino-acid chain: Flotillin-1 (423 aa).

It belongs to the band 7/mec-2 family. Flotillin subfamily. As to quaternary structure, heterooligomeric complex of flotillin-1 and flotillin-2 and caveolin-1 and caveolin-2. As to expression, normally expressed in growing retinal exons of newly differentiated ganglion cells at the retinal margin. After optic nerve injury, expressed in all retinal ganglion cells and retinal axons. Also expressed in endothelial cells, spinal cord, larval and adult skin, muscle processes, thymus and gill macrophages.

It localises to the cell membrane. It is found in the endosome. The protein resides in the membrane. Its subcellular location is the caveola. The protein localises to the melanosome. It localises to the membrane raft. Its function is as follows. May act as a scaffolding protein within caveolar membranes, functionally participating in formation of caveolae or caveolae-like vesicles. The protein is Flotillin-1 (flot1) of Carassius auratus (Goldfish).